The chain runs to 222 residues: Homing endonuclease I-ApeI (222 aa).

As to quaternary structure, probably functions as a monomer. Requires Mg(2+) as cofactor. Mn(2+) serves as cofactor.

Functionally, endonuclease involved in 16S rRNA intron I-alpha homing. Recognizes the minimal target 5'-GCAAGGCTGAAACTTAAAGG-3'; generates 4 base 3' protruding ends 5'-AAAC-3' and 5'-GTTT-3'. This Aeropyrum pernix (strain ATCC 700893 / DSM 11879 / JCM 9820 / NBRC 100138 / K1) protein is Homing endonuclease I-ApeI (apeI).